The following is a 103-amino-acid chain: Ig kappa-b5 chain C region (103 aa).

Positions 5–99 constitute an Ig-like domain; that stretch reads PTVLIFPPAP…GAGSVVQSFS (95 aa). Cys-26 and Cys-85 are disulfide-bonded.

The polypeptide is Ig kappa-b5 chain C region (Oryctolagus cuniculus (Rabbit)).